Reading from the N-terminus, the 53-residue chain is Large ribosomal subunit protein eL40 (53 aa).

It belongs to the eukaryotic ribosomal protein eL40 family.

The chain is Large ribosomal subunit protein eL40 from Pyrobaculum neutrophilum (strain DSM 2338 / JCM 9278 / NBRC 100436 / V24Sta) (Thermoproteus neutrophilus).